The following is a 154-amino-acid chain: Transcriptional repressor NrdR (154 aa).

A zinc finger spans residues 3–34 (CPTCQYNGTRVVDSRPADDGNSIRRRRECEKC). The ATP-cone domain maps to 49-139 (LIVVKKDGAR…VYRQFKDISV (91 aa)).

Belongs to the NrdR family. Requires Zn(2+) as cofactor.

Its function is as follows. Negatively regulates transcription of bacterial ribonucleotide reductase nrd genes and operons by binding to NrdR-boxes. The sequence is that of Transcriptional repressor NrdR from Listeria monocytogenes serotype 4a (strain HCC23).